The sequence spans 125 residues: Large ribosomal subunit protein eL31 (125 aa).

The protein belongs to the eukaryotic ribosomal protein eL31 family. In terms of assembly, component of the large ribosomal subunit.

It is found in the cytoplasm. Its function is as follows. Component of the large ribosomal subunit. The ribosome is a large ribonucleoprotein complex responsible for the synthesis of proteins in the cell. This is Large ribosomal subunit protein eL31 (rpl31) from Xenopus laevis (African clawed frog).